A 432-amino-acid chain; its full sequence is Enolase (432 aa).

(2R)-2-phosphoglycerate is bound at residue Q167. Residue E209 is the Proton donor of the active site. Mg(2+) contacts are provided by D246, E290, and D317. (2R)-2-phosphoglycerate contacts are provided by K342, R371, S372, and K393. K342 (proton acceptor) is an active-site residue.

It belongs to the enolase family. Component of the RNA degradosome, a multiprotein complex involved in RNA processing and mRNA degradation. It depends on Mg(2+) as a cofactor.

It localises to the cytoplasm. The protein resides in the secreted. It is found in the cell surface. It carries out the reaction (2R)-2-phosphoglycerate = phosphoenolpyruvate + H2O. The protein operates within carbohydrate degradation; glycolysis; pyruvate from D-glyceraldehyde 3-phosphate: step 4/5. Catalyzes the reversible conversion of 2-phosphoglycerate (2-PG) into phosphoenolpyruvate (PEP). It is essential for the degradation of carbohydrates via glycolysis. This chain is Enolase, found in Cronobacter sakazakii (strain ATCC BAA-894) (Enterobacter sakazakii).